We begin with the raw amino-acid sequence, 405 residues long: Putative aminotransferase AatC (405 aa).

Lysine 238 carries the N6-(pyridoxal phosphate)lysine modification.

The protein belongs to the class-I pyridoxal-phosphate-dependent aminotransferase family. Homodimer. It depends on pyridoxal 5'-phosphate as a cofactor.

The protein resides in the cytoplasm. The protein is Putative aminotransferase AatC (aatC) of Rhizobium meliloti (strain 1021) (Ensifer meliloti).